The primary structure comprises 501 residues: MSSSGTPDLPVLLTDLKIQYTKIFINNEWHDSVSGKKFPVFNPATEEELCQVEEGDKEDVDKAVKAARQAFQIGSPWRTMDASERGRLLYKLADLIERDRLLLATMESMNGGKLYSNAYLNDLAGCIKTLRYCAGWADKIQGRTIPIDGNFFTYTRHEPIGVCGQIIPWNFPLVMLIWKIGPALSCGNTVVVKPAEQTPLTALHVASLIKEAGFPPGVVNIVPGYGPTAGAAISSHMDIDKVAFTGSTEVGKLIKEAAGKSNLKRVTLELGGKSPCIVLADADLDNAVEFAHHGVFYHQGQCCIAASRIFVEESIYDEFVRRSVERAKKYILGNPLTPGVTQGPQIDKEQYDKILDLIESGKKEGAKLECGGGPWGNKGYFVQPTVFSNVTDEMRIAKEEIFGPVQQIMKFKSLDDVIKRANNTFYGLSAGVFTKDIDKAITISSALQAGTVWVNCYGVVSAQCPFGGFKMSGNGRELGEYGFHEYTEVKTVTVKISQKNS.

The residue at position 2 (Ser-2) is an N-acetylserine. Residues Lys-91 and Lys-128 each carry the N6-acetyllysine modification. Residues 167 to 170, 193 to 196, 226 to 227, and 246 to 247 each bind NAD(+); these read IPWN, KPAE, GP, and GS. Lys-252 carries the N6-acetyllysine modification. The Proton acceptor role is filled by Glu-269. 269 to 271 contacts NAD(+); it reads ELG. Residue Cys-303 is the Nucleophile of the active site. The mediates interaction with PRMT3 stretch occupies residues 336-501; that stretch reads LTPGVTQGPQ…VTVKISQKNS (166 aa). Position 337 is a phosphothreonine (Thr-337). 349-353 serves as a coordination point for NAD(+); the sequence is EQYDK. Lys-353 and Lys-367 each carry N6-acetyllysine. 400 to 402 provides a ligand contact to NAD(+); sequence EIF. An N6-acetyllysine modification is found at Lys-410. Phosphoserine is present on Ser-413. N6-acetyllysine is present on residues Lys-419, Lys-435, and Lys-495.

The protein belongs to the aldehyde dehydrogenase family. In terms of assembly, homotetramer. Interacts with PRMT3; the interaction is direct, inhibits ALDH1A1 aldehyde dehydrogenase activity and is independent of the methyltransferase activity of PRMT3. Post-translationally, the N-terminus is blocked most probably by acetylation. Expressed by erythrocytes (at protein level).

Its subcellular location is the cytoplasm. It localises to the cytosol. The protein resides in the cell projection. The protein localises to the axon. It catalyses the reaction an aldehyde + NAD(+) + H2O = a carboxylate + NADH + 2 H(+). The catalysed reaction is all-trans-retinal + NAD(+) + H2O = all-trans-retinoate + NADH + 2 H(+). It carries out the reaction 9-cis-retinal + NAD(+) + H2O = 9-cis-retinoate + NADH + 2 H(+). The enzyme catalyses 11-cis-retinal + NAD(+) + H2O = 11-cis-retinoate + NADH + 2 H(+). It catalyses the reaction 13-cis-retinal + NAD(+) + H2O = 13-cis-retinoate + NADH + 2 H(+). The catalysed reaction is 3-deoxyglucosone + NAD(+) + H2O = 2-dehydro-3-deoxy-D-gluconate + NADH + 2 H(+). It carries out the reaction (E)-4-hydroxynon-2-enal + NAD(+) + H2O = (E)-4-hydroxynon-2-enoate + NADH + 2 H(+). The enzyme catalyses malonaldehyde + NAD(+) + H2O = 3-oxopropanoate + NADH + 2 H(+). It catalyses the reaction hexanal + NAD(+) + H2O = hexanoate + NADH + 2 H(+). The catalysed reaction is propanal + NAD(+) + H2O = propanoate + NADH + 2 H(+). It carries out the reaction acetaldehyde + NAD(+) + H2O = acetate + NADH + 2 H(+). The enzyme catalyses benzaldehyde + NAD(+) + H2O = benzoate + NADH + 2 H(+). It catalyses the reaction 4-aminobutanal + NAD(+) + H2O = 4-aminobutanoate + NADH + 2 H(+). It participates in cofactor metabolism; retinol metabolism. Its activity is regulated as follows. Inhibited by citral, disulfiram, and cyanamide. Activated by diethylstilbestrol. Inhibited by duocarmycin analogs. In terms of biological role, cytosolic dehydrogenase that catalyzes the irreversible oxidation of a wide range of aldehydes to their corresponding carboxylic acid. Functions downstream of retinol dehydrogenases and catalyzes the oxidation of retinaldehyde into retinoic acid, the second step in the oxidation of retinol/vitamin A into retinoic acid. This pathway is crucial to control the levels of retinol and retinoic acid, two important molecules which excess can be teratogenic and cytotoxic. Also oxidizes aldehydes resulting from lipid peroxidation like (E)-4-hydroxynon-2-enal/HNE, malonaldehyde and hexanal that form protein adducts and are highly cytotoxic. By participating for instance to the clearance of (E)-4-hydroxynon-2-enal/HNE in the lens epithelium prevents the formation of HNE-protein adducts and lens opacification. Also functions downstream of fructosamine-3-kinase in the fructosamine degradation pathway by catalyzing the oxidation of 3-deoxyglucosone, the carbohydrate product of fructosamine 3-phosphate decomposition, which is itself a potent glycating agent that may react with lysine and arginine side-chains of proteins. Also has an aminobutyraldehyde dehydrogenase activity and is probably part of an alternative pathway for the biosynthesis of GABA/4-aminobutanoate in midbrain, thereby playing a role in GABAergic synaptic transmission. The protein is Aldehyde dehydrogenase 1A1 of Homo sapiens (Human).